A 276-amino-acid polypeptide reads, in one-letter code: NH(3)-dependent NAD(+) synthetase (276 aa).

Residue 43–50 coordinates ATP; the sequence is GISGGVDS. Residue Asp-49 participates in Mg(2+) binding. A deamido-NAD(+)-binding site is contributed by Arg-146. Residue Thr-166 participates in ATP binding. Glu-171 serves as a coordination point for Mg(2+). Deamido-NAD(+)-binding residues include Lys-179 and Asp-186. The ATP site is built by Lys-195 and Thr-217. 266-267 is a deamido-NAD(+) binding site; the sequence is HK.

The protein belongs to the NAD synthetase family. In terms of assembly, homodimer.

The catalysed reaction is deamido-NAD(+) + NH4(+) + ATP = AMP + diphosphate + NAD(+) + H(+). It participates in cofactor biosynthesis; NAD(+) biosynthesis; NAD(+) from deamido-NAD(+) (ammonia route): step 1/1. Its function is as follows. Catalyzes the ATP-dependent amidation of deamido-NAD to form NAD. Uses ammonia as a nitrogen source. The chain is NH(3)-dependent NAD(+) synthetase from Shewanella baltica (strain OS185).